The primary structure comprises 871 residues: MAQMHTPMMKQYLQIKAKYQDAFLFFRLGDFYEMFNEDAIKAAQELEITLTGRGQGEDRIPMCGVPYHSADSYIARLIDKGYKIAICEQVEDPKTAKGVVKREVTKVLTPGTLMNSKLLAEKENNYLLAFASEGEDGWGIARCDLSTGESDVTLIRGGSAELLQEIAASGVKEAIAPAGLEEELKAKLGEQQGFVVSYEEQEDVPKEYERLINHIQQPLLKRAYGRMLHYLLATQKQSLRHLQQVVFHPADSYLKMDVHAKRNLELVQTLRDKKKSGSLLAVIDQTVTAMGGRLLRQWIERPLVDRKAIAGRQAVVEAFLEHFFEREQLRDCLRQVYDIERLAARIAYGSVNARELVQLKRSLQNIPEIEATLEQVGLGGRWLNQSEQFADLVALMEQSLVDDPPLSLTEGGLIVDGYNEELDAYRDASRNGKQWIAELEQSEREATGIRSLKVGYNRVFGYYIEVTRANAHLLPDGRYERKQTLTNAERYITPELKEKEALILEADEKLADLEYRLFADIRKQVEAYVASLQKLAADISEMDVLAGFASVAEQNGYTKPTITESRDVAIKGGRHPVVETVIKRGSYVENDIDLTGDRDMLLITGPNMGGKSTYMRQLALTVVMAQIGSYVPAAEATLPLFDQIFTRIGAADDLASGQSTFMVEMLETKDALVKATPHSLILLDEIGRGTSTYDGMALAQAIIEYIYETIGAKTLFSTHYHELTRLADSLHTLRNVHVSAVEENGTVVFLHQVIEGAADRSYGVYVAELAGLPKQVTTRAEALLTELEHLPQRPTSASVEQPVDSAKTETAATAEEPQQLSLFPTDEETKPKQPTKKERSVLAKMAEVDVLHLTPLQALEKINEWQKQLNK.

605 to 612 (GPNMGGKS) provides a ligand contact to ATP. The segment at 791–840 (PQRPTSASVEQPVDSAKTETAATAEEPQQLSLFPTDEETKPKQPTKKERS) is disordered. Residues 827–840 (EETKPKQPTKKERS) show a composition bias toward basic and acidic residues.

Belongs to the DNA mismatch repair MutS family.

Functionally, this protein is involved in the repair of mismatches in DNA. It is possible that it carries out the mismatch recognition step. This protein has a weak ATPase activity. The polypeptide is DNA mismatch repair protein MutS (Shouchella clausii (strain KSM-K16) (Alkalihalobacillus clausii)).